Here is a 525-residue protein sequence, read N- to C-terminus: MSDIHEHKILILDFGSQYTQLIARRIREIGVYCELWAWDVTEAQIREFAPNGIILAGGPESVTAENSPRAPEYVFTAGVPVLGICYGMQTMSEQLGGKVIQGVGEGEFGYAQIEMLTDSLLFKGIEDAVNSEGKPLLDVWMSHGDKVSAIPEGFVAVAKTDTCPFAAMANEEKQFFGVQFHPEVTHTRQGMRMLSHFALDICGCAANWKPSSIIEDAIERLKKQIGDDEVILGLSGGVDSSVVAMLLHRAIGKKLTCVFVDNGLLRLNEAEQVMEMFGDHFGLNIIHVDAENRFLDAMKGEADPEAKRKIIGRVFVEIFDEESKKCANAKWLAQGTIYPDVIESAGSATGKAHVIKSHHNVGGLPDDMELGLVEPLRELFKDEVRKIGLELGLPYNMLYRHPFPGPGLGVRVLGEVKKEYCDLLRRADAIFIEELHKADLYNKVSQAFTVFLPVRSVGVMGDGRKYDWVVSLRAVETVDFMTAHWAHLPYDFLGRVSNRIINEVDGISRVVYDISGKPPATIEWE.

Residues 8 to 207 (KILILDFGSQ…ALDICGCAAN (200 aa)) form the Glutamine amidotransferase type-1 domain. Residue C85 is the Nucleophile of the active site. Catalysis depends on residues H181 and E183. The region spanning 208 to 400 (WKPSSIIEDA…LGLPYNMLYR (193 aa)) is the GMPS ATP-PPase domain. 235 to 241 (SGGVDSS) contributes to the ATP binding site.

As to quaternary structure, homodimer.

The catalysed reaction is XMP + L-glutamine + ATP + H2O = GMP + L-glutamate + AMP + diphosphate + 2 H(+). Its pathway is purine metabolism; GMP biosynthesis; GMP from XMP (L-Gln route): step 1/1. Functionally, catalyzes the synthesis of GMP from XMP. This is GMP synthase [glutamine-hydrolyzing] from Shewanella baltica (strain OS155 / ATCC BAA-1091).